The chain runs to 334 residues: uncharacterized protein (334 aa).

WD repeat units follow at residues 56–86 (LKGEAIIQIHYSQDGNYLLSTATDGLAKLWT), 98–128 (KPVAMIFNGAFSRDGKAIITAGYNGVARIWD), 139–169 (GHTSAVTDVVFLSDDMGVVTSSDDGTIEGWS), 220–250 (TDQGRLNDVDFSQDGKLLVTAGFDGTARVFN), and 262–291 (LDDGWVTGVAINQDNLIATVSDDGILRVWN).

This is an uncharacterized protein from Synechocystis sp. (strain ATCC 27184 / PCC 6803 / Kazusa).